Reading from the N-terminus, the 678-residue chain is Exoribonuclease 2 (678 aa).

The region spanning 193–521 (REDLTALPFV…INHRLLKAHI (329 aa)) is the RNB domain. An S1 motif domain is found at 568 to 650 (ETRFQAEIFD…ENRSLVGKPT (83 aa)). The disordered stretch occupies residues 659–678 (ETQTSAEQPAEGAENNEPQV).

This sequence belongs to the RNR ribonuclease family. RNase II subfamily.

The protein resides in the cytoplasm. It carries out the reaction Exonucleolytic cleavage in the 3'- to 5'-direction to yield nucleoside 5'-phosphates.. Involved in mRNA degradation. Hydrolyzes single-stranded polyribonucleotides processively in the 3' to 5' direction. The protein is Exoribonuclease 2 of Vibrio cholerae serotype O1 (strain ATCC 39315 / El Tor Inaba N16961).